The following is a 226-amino-acid chain: Cytidylate kinase (226 aa).

Position 10–18 (10–18 (GPAGAGKST)) interacts with ATP.

It belongs to the cytidylate kinase family. Type 1 subfamily.

It is found in the cytoplasm. The enzyme catalyses CMP + ATP = CDP + ADP. It catalyses the reaction dCMP + ATP = dCDP + ADP. This is Cytidylate kinase from Caldicellulosiruptor bescii (strain ATCC BAA-1888 / DSM 6725 / KCTC 15123 / Z-1320) (Anaerocellum thermophilum).